Consider the following 478-residue polypeptide: MKKVIVIGINHAGTSFIRTLLSKSKDFKVNAYDRNTNISFLGCGIALAVSGVVKNTDDLFYSNPEELKQMGANIFMSHDVTNIDLIKKQVTVRDLTSNKEFTDQFDQLVIASGAWPICMNVENKVTHKPLEFNYTDKYCGNVKNLISCKLYQHALTLIDSFRKDKTIKSVAIVGSGYIGLELAEAAWLCKKQVTVIDLLDKPAGNNFDHEFTDELEKVMQKDGLKLMMGCSVKGFVVDSTNNVVKGVETDKGIVNADLVIQSIGFRPSTKFVPKDQNFEFIHNGSIKVNEFLQALNHKDVYVIGGCAAIYNAASEQYENIDLATNAVKSGLVAAMHIIGSNQVKLQSIVGTNALHIFGLNLAACGLTEQRAKKLGFDVGISVVDDNDRPEFMGSYDKVRFKLVYDKKTLRILGAQLLSWNTNHSEIIFYIALAIQKQMLLTELGLVDVYFLPHYNKPFNFVLATVLQALGFSYYIPKK.

Residues 8–12, aspartate 33, cysteine 43, valine 80, 111–114, lysine 149, and tyrosine 177 contribute to the FAD site; these read GINHA and ASGA. Catalysis depends on histidine 11, which acts as the Proton acceptor. Catalysis depends on cysteine 43, which acts as the Redox-active. Residue cysteine 43 is modified to Cysteine sulfinic acid (-SO2H). NAD(+) is bound by residues 170 to 185, aspartate 197, and glycine 264; that span reads VAIVGSGYIGLELAEA. Residues 295 to 305, leucine 322, alanine 323, and threonine 324 contribute to the FAD site; that span reads LNHKDVYVIGG. Alanine 353 contacts NAD(+). Residue phenylalanine 450 participates in FAD binding.

This sequence belongs to the class-III pyridine nucleotide-disulfide oxidoreductase family. The cofactor is FAD.

The enzyme catalyses 2 NADH + O2 + 2 H(+) = 2 NAD(+) + 2 H2O. In terms of biological role, catalyzes the four-electron reduction of molecular oxygen to water. The polypeptide is NADH oxidase (nox) (Mycoplasma genitalium (strain ATCC 33530 / DSM 19775 / NCTC 10195 / G37) (Mycoplasmoides genitalium)).